Reading from the N-terminus, the 108-residue chain is Anti-CBASS protein 2 (108 aa).

3',3'-cGAMP contacts are provided by glutamine 4, tyrosine 11, and lysine 26.

It belongs to the Acb2 family. Homohexamer in apo and 3',3'-cGAMP-bound form.

Its function is as follows. Antagonizes CBASS (cyclic oligonucleotide-based antiphage signaling system). Binds and sequesters host-produced 3',3'-cyclic GMP-AMP (cGAMP) (thus preventing host CapV activation) without degrading the cyclic nucleotide. Probably binds some other cyclic dinucleotides as well. The protein is Anti-CBASS protein 2 of Pseudomonas phage JBD67.